We begin with the raw amino-acid sequence, 215 residues long: MANVYDWFQERLEIQALADDVTSKYVPPHVNIFYCLGGITLTCFLIQFATGFAMTFYYKPTVTEAYASVQYIMNEVSFGWLIRSIHRWSASMMVLMMILHVFRVYLTGGFKKPRELTWISGVILAVITVSFGVTGYSLPWDQVGYWAVKIVSGVPEAIPVVGVLISDLLRGGSSVGQATLTRYYSAHTFVLPWLIAVFMLLHFLMIRKQGISGPL.

Over 1–31 (MANVYDWFQERLEIQALADDVTSKYVPPHVN) the chain is Cytoplasmic. Residues 32 to 52 (IFYCLGGITLTCFLIQFATGF) traverse the membrane as a helical segment. C35 contributes to the heme c binding site. Residues 53 to 89 (AMTFYYKPTVTEAYASVQYIMNEVSFGWLIRSIHRWS) lie on the Lumenal, thylakoid side of the membrane. Heme b contacts are provided by R83, H86, H100, and R103. The helical transmembrane segment at 90–110 (ASMMVLMMILHVFRVYLTGGF) threads the bilayer. Residues 111 to 115 (KKPRE) are Cytoplasmic-facing. Residues 116–136 (LTWISGVILAVITVSFGVTGY) traverse the membrane as a helical segment. Over 137–185 (SLPWDQVGYWAVKIVSGVPEAIPVVGVLISDLLRGGSSVGQATLTRYYS) the chain is Lumenal, thylakoid. The chain crosses the membrane as a helical span at residues 186–206 (AHTFVLPWLIAVFMLLHFLMI). H187 and H202 together coordinate heme b. Residues 207 to 215 (RKQGISGPL) are Cytoplasmic-facing. Position 208 (K208) interacts with heme c.

It belongs to the cytochrome b family. PetB subfamily. The 4 large subunits of the cytochrome b6-f complex are cytochrome b6, subunit IV (17 kDa polypeptide, PetD), cytochrome f and the Rieske protein, while the 4 small subunits are PetG, PetL, PetM and PetN. The complex functions as a dimer. Requires heme b as cofactor. It depends on heme c as a cofactor.

Its subcellular location is the cellular thylakoid membrane. Functionally, component of the cytochrome b6-f complex, which mediates electron transfer between photosystem II (PSII) and photosystem I (PSI), cyclic electron flow around PSI, and state transitions. The chain is Cytochrome b6 from Mastigocladus laminosus (Fischerella sp.).